The primary structure comprises 239 residues: Serine protease SplD (239 aa).

An N-terminal signal peptide occupies residues 1–36 (MNKNIIIKSIAALTILTSITGVGTTVVDGIQQTAKA). Residues H75, D114, and S192 each act as charge relay system in the active site.

Belongs to the peptidase S1B family.

The protein resides in the secreted. In Staphylococcus aureus (strain COL), this protein is Serine protease SplD (splD).